The sequence spans 367 residues: Peptide chain release factor 2 (367 aa).

At Gln254 the chain carries N5-methylglutamine.

The protein belongs to the prokaryotic/mitochondrial release factor family. Post-translationally, methylated by PrmC. Methylation increases the termination efficiency of RF2.

It is found in the cytoplasm. Functionally, peptide chain release factor 2 directs the termination of translation in response to the peptide chain termination codons UGA and UAA. This chain is Peptide chain release factor 2, found in Burkholderia mallei (strain ATCC 23344).